The primary structure comprises 115 residues: U3-lycotoxin-Ls1a (115 aa).

The signal sequence occupies residues 1–20; the sequence is MKFVLLFGVLLVTLFSYSSA. Residues 21-44 constitute a propeptide that is removed on maturation; sequence EMLDDFDQADEDELLSLIEKEEAR. 4 cysteine pairs are disulfide-bonded: C48–C63, C55–C72, C62–C87, and C74–C85.

This sequence belongs to the neurotoxin 19 (CSTX) family. 01 subfamily. As to expression, expressed by the venom gland.

The protein resides in the secreted. The sequence is that of U3-lycotoxin-Ls1a from Lycosa singoriensis (Wolf spider).